The chain runs to 848 residues: Translation initiation factor IF-2 (848 aa).

The interval 1-20 (MNESKGAVDSGLMSGKTERT) is disordered. The tr-type G domain maps to 346 to 516 (PRAPVVTVMG…LLMAELLELK (171 aa)). The interval 355–362 (GHVDHGKT) is G1. 355–362 (GHVDHGKT) contacts GTP. The tract at residues 380–384 (GITQH) is G2. The tract at residues 402 to 405 (DTPG) is G3. GTP-binding positions include 402–406 (DTPGH) and 456–459 (NKID). The G4 stretch occupies residues 456-459 (NKID). The segment at 492–494 (SAK) is G5.

This sequence belongs to the TRAFAC class translation factor GTPase superfamily. Classic translation factor GTPase family. IF-2 subfamily.

The protein resides in the cytoplasm. One of the essential components for the initiation of protein synthesis. Protects formylmethionyl-tRNA from spontaneous hydrolysis and promotes its binding to the 30S ribosomal subunits. Also involved in the hydrolysis of GTP during the formation of the 70S ribosomal complex. The chain is Translation initiation factor IF-2 from Ehrlichia canis (strain Jake).